Here is a 211-residue protein sequence, read N- to C-terminus: MADAVLEARELGVRRGHCAIFRGLGISLAPGDLLQVMGPNGAGKTSLLRVLSSLMPPAEGDLYWRGRAVRAGDPDYLAQVAYLGHVNGIYPDLSAFENLQFAARMAGQQPDADAMHHALARFGLDRVADAPARTLSQGQRRRVALSRLALTPRALWLLDEPLTSLDDASTDCFHTLLAEHLQRGGIAVVATHQRLPAEGAVLDLATDAGSP.

The region spanning 6–208 (LEARELGVRR…GAVLDLATDA (203 aa)) is the ABC transporter domain. Position 38 to 45 (38 to 45 (GPNGAGKT)) interacts with ATP.

The protein belongs to the ABC transporter superfamily. CcmA exporter (TC 3.A.1.107) family. As to quaternary structure, the complex is composed of two ATP-binding proteins (CcmA) and two transmembrane proteins (CcmB).

Its subcellular location is the cell inner membrane. The catalysed reaction is heme b(in) + ATP + H2O = heme b(out) + ADP + phosphate + H(+). Part of the ABC transporter complex CcmAB involved in the biogenesis of c-type cytochromes; once thought to export heme, this seems not to be the case, but its exact role is uncertain. Responsible for energy coupling to the transport system. The sequence is that of Cytochrome c biogenesis ATP-binding export protein CcmA 2 from Cupriavidus metallidurans (strain ATCC 43123 / DSM 2839 / NBRC 102507 / CH34) (Ralstonia metallidurans).